A 206-amino-acid polypeptide reads, in one-letter code: Small ribosomal subunit protein uS4 (206 aa).

Positions 96–156 (SRLDNIVYRL…KKSKNQLRIK (61 aa)) constitute an S4 RNA-binding domain.

This sequence belongs to the universal ribosomal protein uS4 family. In terms of assembly, part of the 30S ribosomal subunit. Contacts protein S5. The interaction surface between S4 and S5 is involved in control of translational fidelity.

One of the primary rRNA binding proteins, it binds directly to 16S rRNA where it nucleates assembly of the body of the 30S subunit. In terms of biological role, with S5 and S12 plays an important role in translational accuracy. The protein is Small ribosomal subunit protein uS4 of Buchnera aphidicola subsp. Cinara cedri (strain Cc).